Consider the following 443-residue polypeptide: Glycerol-3-phosphate acyltransferase 3-like (443 aa).

3 consecutive transmembrane segments (helical) span residues 15–35, 146–166, and 170–190; these read WFSC…SLGI, ISLR…CILL, and ITLT…VGFL. Residues 238 to 243 carry the HXXXXD motif motif; that stretch reads HTSPID. Residues 358–378 form a helical membrane-spanning segment; that stretch reads IMSYLLRMMTSWAIVCNVWYL.

This sequence belongs to the 1-acyl-sn-glycerol-3-phosphate acyltransferase family.

It localises to the endoplasmic reticulum membrane. The enzyme catalyses sn-glycerol 3-phosphate + an acyl-CoA = a 1-acyl-sn-glycero-3-phosphate + CoA. It carries out the reaction a 1-acyl-sn-glycero-3-phosphate + an acyl-CoA = a 1,2-diacyl-sn-glycero-3-phosphate + CoA. It participates in glycerolipid metabolism; triacylglycerol biosynthesis. It functions in the pathway phospholipid metabolism; CDP-diacylglycerol biosynthesis; CDP-diacylglycerol from sn-glycerol 3-phosphate: step 1/3. Its function is as follows. May transfer the acyl-group from acyl-coA to the sn-1 position of glycerol-3-phosphate, an essential step in glycerolipid biosynthesis. Also transfers the acyl-group from acyl-coA to the sn-2 position of 1-acyl-sn-glycerol-3-phosphate (lysophosphatidic acid, or LPA), forming 1,2-diacyl-sn-glycerol-3-phosphate (phosphatidic acid, or PA). The protein is Glycerol-3-phosphate acyltransferase 3-like (agpat9l) of Danio rerio (Zebrafish).